The following is a 387-amino-acid chain: Xylose isomerase (387 aa).

Active-site residues include histidine 53 and aspartate 56. Mg(2+) contacts are provided by glutamate 180, glutamate 216, histidine 219, aspartate 244, aspartate 254, aspartate 256, and aspartate 286.

Belongs to the xylose isomerase family. As to quaternary structure, homotetramer. The cofactor is Mg(2+).

The protein resides in the cytoplasm. It carries out the reaction alpha-D-xylose = alpha-D-xylulofuranose. In Thermus caldophilus, this protein is Xylose isomerase (xylA).